The sequence spans 295 residues: Pyridoxal 5'-phosphate synthase subunit PdxS (295 aa).

Asp-25 provides a ligand contact to D-ribose 5-phosphate. The active-site Schiff-base intermediate with D-ribose 5-phosphate is Lys-82. Gly-154 contributes to the D-ribose 5-phosphate binding site. Arg-166 provides a ligand contact to D-glyceraldehyde 3-phosphate. D-ribose 5-phosphate is bound by residues Gly-215 and 236–237 (GS).

The protein belongs to the PdxS/SNZ family. In terms of assembly, in the presence of PdxT, forms a dodecamer of heterodimers.

It carries out the reaction aldehydo-D-ribose 5-phosphate + D-glyceraldehyde 3-phosphate + L-glutamine = pyridoxal 5'-phosphate + L-glutamate + phosphate + 3 H2O + H(+). It functions in the pathway cofactor biosynthesis; pyridoxal 5'-phosphate biosynthesis. Its function is as follows. Catalyzes the formation of pyridoxal 5'-phosphate from ribose 5-phosphate (RBP), glyceraldehyde 3-phosphate (G3P) and ammonia. The ammonia is provided by the PdxT subunit. Can also use ribulose 5-phosphate and dihydroxyacetone phosphate as substrates, resulting from enzyme-catalyzed isomerization of RBP and G3P, respectively. The protein is Pyridoxal 5'-phosphate synthase subunit PdxS of Dictyoglomus turgidum (strain DSM 6724 / Z-1310).